The primary structure comprises 274 residues: Nuclease (274 aa).

The signal sequence occupies residues 1-24 (MGICGKLGVAALVALIVGCSPVQS). Histidine 124 acts as the Proton acceptor in catalysis. The Mn(2+) site is built by asparagine 155, aspartate 246, glutamate 249, aspartate 255, phenylalanine 256, glutamine 265, and glutamate 269.

It belongs to the DNA/RNA non-specific endonuclease family. Monomer. The cofactor is Mn(2+). It depends on Mg(2+) as a cofactor. Ca(2+) serves as cofactor. Requires Co(2+) as cofactor. In terms of processing, the N-terminus is blocked.

Its subcellular location is the periplasm. Its function is as follows. Catalyzes the degradation of both RNA and DNA; has the potential to act as an endonuclease. In Nostoc sp. (strain PCC 7120 / SAG 25.82 / UTEX 2576), this protein is Nuclease (nucA).